A 471-amino-acid polypeptide reads, in one-letter code: Cleavage and polyadenylation specificity factor subunit 7 (471 aa).

Residues 34–68 are disordered; that stretch reads VLTAASQPSDDRSSSTEPPPPVRQEPAPKPNNKTP. Pro residues predominate over residues 50-62; it reads EPPPPVRQEPAPK. In terms of domain architecture, RRM spans 82–162; sequence AAVYVGSFSW…EKVDVRPATR (81 aa). The segment at 176 to 220 is disordered; sequence ECVRVPRGGIPPRAHSRDSSDSADGRATPSENLVPSSARVDKPPS. Over residues 190–199 the composition is skewed to basic and acidic residues; that stretch reads HSRDSSDSAD. A Phosphothreonine modification is found at T203. S205 carries the post-translational modification Phosphoserine. K354 is covalently cross-linked (Glycyl lysine isopeptide (Lys-Gly) (interchain with G-Cter in SUMO2)). A disordered region spans residues 409–471; sequence SVGASGSSSR…HRDRERDRHH (63 aa). Phosphoserine occurs at positions 413 and 423. The tract at residues 418–469 is arg/Ser-rich domain; that stretch reads RKRHRSRERSPSRSRESSRRHRDLLHNEDRHDDYFQERNREHERHRDRERDR. Composition is skewed to basic and acidic residues over residues 425–434 and 441–471; these read ERSPSRSRES and LLHN…DRHH.

The protein belongs to the RRM CPSF6/7 family. As to quaternary structure, component of the cleavage factor Im (CFIm) complex which is a heterotetramer composed of two subunits of NUDT21/CPSF5 and two subunits of CPSF6 or CPSF7 or a heterodimer of CPSF6 and CPSF7. The cleavage factor Im (CFIm) complex associates with the CPSF and CSTF complexes to promote the assembly of the core mRNA 3'-processing machinery. Interacts with NUDT21/CPSF5. Interacts (via Arg/Ser-rich domain) with FIP1L1 (preferentially via unphosphorylated form and Arg/Glu/Asp-rich region); this interaction mediates, at least in part, the interaction between the CFIm and CPSF complexes and may be inhibited by CPSF7 hyper-phosphorylation. Post-translationally, phosphorylated. In terms of processing, asymmetrically dimethylated on arginine residues by PRMT1.

The protein localises to the nucleus. The protein resides in the cytoplasm. In terms of biological role, component of the cleavage factor Im (CFIm) complex that functions as an activator of the pre-mRNA 3'-end cleavage and polyadenylation processing required for the maturation of pre-mRNA into functional mRNAs. CFIm contributes to the recruitment of multiprotein complexes on specific sequences on the pre-mRNA 3'-end, so called cleavage and polyadenylation signals (pA signals). Most pre-mRNAs contain multiple pA signals, resulting in alternative cleavage and polyadenylation (APA) producing mRNAs with variable 3'-end formation. The CFIm complex acts as a key regulator of cleavage and polyadenylation site choice during APA through its binding to 5'-UGUA-3' elements localized in the 3'-untranslated region (UTR) for a huge number of pre-mRNAs. CPSF7 activates directly the mRNA 3'-processing machinery. Binds to pA signals in RNA substrates. The protein is Cleavage and polyadenylation specificity factor subunit 7 of Mus musculus (Mouse).